The primary structure comprises 119 residues: Fluoride-specific ion channel FluC 2 (119 aa).

2 consecutive transmembrane segments (helical) span residues 1–21 (MIFA…ALTS) and 44–64 (GAFF…YAFL). The Na(+) site is built by Gly70 and Thr73. Residues 98–118 (LLASYLGGAVLLTCGYYLGSL) form a helical membrane-spanning segment.

The protein belongs to the fluoride channel Fluc/FEX (TC 1.A.43) family.

The protein resides in the cell membrane. It catalyses the reaction fluoride(in) = fluoride(out). Its activity is regulated as follows. Na(+) is not transported, but it plays an essential structural role and its presence is essential for fluoride channel function. Functionally, fluoride-specific ion channel. Important for reducing fluoride concentration in the cell, thus reducing its toxicity. The sequence is that of Fluoride-specific ion channel FluC 2 from Lactobacillus delbrueckii subsp. bulgaricus (strain ATCC 11842 / DSM 20081 / BCRC 10696 / JCM 1002 / NBRC 13953 / NCIMB 11778 / NCTC 12712 / WDCM 00102 / Lb 14).